A 435-amino-acid chain; its full sequence is Type A flavoprotein fprA (435 aa).

The segment at 48–228 is zinc metallo-hydrolase; sequence ANGTTYNAYA…PFRSFVAQVL (181 aa). Fe cation-binding residues include histidine 98, glutamate 100, aspartate 102, histidine 167, aspartate 186, and histidine 243. In terms of domain architecture, Flavodoxin-like spans 276–415; the sequence is LLIFYVSAYR…EGRAFGRRLA (140 aa).

The protein in the N-terminal section; belongs to the zinc metallo-hydrolase group 3 family. As to quaternary structure, homodimer. The cofactor is FMN. Fe cation serves as cofactor.

Its function is as follows. Low-potential electron donor to a number of redox enzymes. The protein is Type A flavoprotein fprA (fprA) of Rhodobacter capsulatus (Rhodopseudomonas capsulata).